We begin with the raw amino-acid sequence, 294 residues long: Acetyl-coenzyme A carboxylase carboxyl transferase subunit beta (294 aa).

The CoA carboxyltransferase N-terminal domain occupies 29–294 (LWEKCPECGQ…TQEVKLQTNA (266 aa)). Cys-33, Cys-36, Cys-52, and Cys-55 together coordinate Zn(2+). The segment at 33 to 55 (CPECGQVVYRKDLIDNCSVCSNC) adopts a C4-type zinc-finger fold.

It belongs to the AccD/PCCB family. In terms of assembly, acetyl-CoA carboxylase is a heterohexamer composed of biotin carboxyl carrier protein (AccB), biotin carboxylase (AccC) and two subunits each of ACCase subunit alpha (AccA) and ACCase subunit beta (AccD). Zn(2+) serves as cofactor.

The protein localises to the cytoplasm. The catalysed reaction is N(6)-carboxybiotinyl-L-lysyl-[protein] + acetyl-CoA = N(6)-biotinyl-L-lysyl-[protein] + malonyl-CoA. It functions in the pathway lipid metabolism; malonyl-CoA biosynthesis; malonyl-CoA from acetyl-CoA: step 1/1. Component of the acetyl coenzyme A carboxylase (ACC) complex. Biotin carboxylase (BC) catalyzes the carboxylation of biotin on its carrier protein (BCCP) and then the CO(2) group is transferred by the transcarboxylase to acetyl-CoA to form malonyl-CoA. This Prochlorococcus marinus (strain NATL1A) protein is Acetyl-coenzyme A carboxylase carboxyl transferase subunit beta.